The sequence spans 2731 residues: Teneurin-1 (2731 aa).

Residues 1-72 form a disordered region; it reads MEQTDCKPYQ…KRKDVEKSTQ (72 aa). The Teneurin N-terminal domain occupies 1–318; it reads MEQTDCKPYQ…KPYRCCNWKC (318 aa). The Cytoplasmic portion of the chain corresponds to 1–324; that stretch reads MEQTDCKPYQ…NWKCTALSAT (324 aa). A compositionally biased stretch (basic and acidic residues) spans 44–55; sequence ETLHEYNQELRR. Positions 62 to 65 match the Nuclear localization signal (NLS) motif; that stretch reads RKRK. S105 carries the phosphoserine modification. The residue at position 109 (T109) is a Phosphothreonine. A Phosphoserine modification is found at S116. The interval 175 to 241 is disordered; that stretch reads DSAQDMQSSP…PAPPTSTQDS (67 aa). The segment covering 178–189 has biased composition (polar residues); that stretch reads QDMQSSPHNQFT. Positions 192-201 are enriched in pro residues; that stretch reads PLPPPPPPPH. The segment covering 214 to 224 has biased composition (polar residues); sequence DSLQRRSMTTR. The short motif at 290–297 is the Required for interaction with SORBS1 (Ten-1 ICD form) element; the sequence is PPPRPLPR. A helical transmembrane segment spans residues 325 to 345; it reads AITVTLALLLAYVIAVHLFGL. Over 346–2731 the chain is Extracellular; it reads TWQLQPVGQI…FMRQSEIGRR (2386 aa). N432 carries N-linked (GlcNAc...) asparagine glycosylation. 8 EGF-like domains span residues 527–558, 559–590, 591–623, 624–656, 657–690, 691–720, 721–752, and 760–795; these read IMDDCSTNCNGNGECISGHCHCFPGFLGPDCA, RDSCPVLCGGNGEYEKGHCVCRNGWKGPECDV, PEEQCIDPTCFGHGTCIMGVCICVPGYKGEICE, EEDCLDPMCSSHGICVKGECHCSTGWGGVNCET, PLPICQEQCSGHGTFLLDTGVCSCDPKWTGSDCS, TELCTMECGSHGVCSRGICQCEEGWVGPTC, EERSCHSHCAEHGQCKDGKCECSPGWEGDHCT, and VRDGCPGLCFGNGRCTLDQNGWHCVCQVGWSGTGCN. 22 disulfide bridges follow: C531-C541, C535-C546, C548-C557, C566-C577, C579-C588, C595-C606, C600-C611, C613-C622, C627-C638, C632-C643, C645-C654, C665-C678, C680-C689, C694-C704, C698-C709, C711-C720, C725-C735, C729-C740, C742-C751, C764-C774, C768-C783, and C785-C794. N-linked (GlcNAc...) asparagine glycans are attached at residues N904 and N1083. NHL repeat units follow at residues 1193–1218, 1298–1342, 1357–1408, 1420–1464, and 1487–1530; these read LFAPVALASGPDGSVYVGDFNFVRRI, SHCG…NAVI, LSCD…IAGR, FLVS…VTTN, and CFSG…ISKN. Residues 1540–1559 form a YD 1 repeat; sequence YEIASPADQELYQFTVNGTH. N-linked (GlcNAc...) asparagine glycans are attached at residues N1556 and N1573. 4 YD repeats span residues 1576-1596, 1614-1638, 1639-1660, and 1661-1681; these read YNAEGDLGAITSSNGNSVHIR, YWLTISSNGVLKRVSAQGYNLALMT, YPGNTGLLATKSNENGWTTVYE, and YDPEGHLTNATFPTGEVSSFH. Residues N1669, N1705, N1743, N1763, N1787, and N1848 are each glycosylated (N-linked (GlcNAc...) asparagine). YD repeat units lie at residues 1851 to 1870, 1871 to 1891, 1892 to 1910, 1911 to 1931, 1939 to 1955, 1956 to 1975, 1976 to 1995, 1998 to 2018, 2021 to 2041, 2091 to 2111, and 2119 to 2139; these read YSPSGLVTFIQRGTWNEKME, YDQSGKIISRTWADGKIWSYT, YLEKSVMLLLHSQRRYIFE, YDQSDCLLSVTMPSMVRHSLQ, YRNIYTPPDSSTSFIQD, YSRDGRLLQTLHLGTGRRVL, YKYTKQARLSEILYDTTQVT, YEESSGVIKTIHLMHDGFICT, YRQTGPLIGRQIFRFSEEGLV, YDLNQVITTTVMKHTKIFNAN, and YEILKAIAYWMTIQYDNMGRM. N-linked (GlcNAc...) asparagine glycosylation occurs at N2151. 5 YD repeats span residues 2159-2179, 2180-2200, 2202-2222, 2234-2254, and 2256-2276; these read YDADGQLQTVSVNDKIQWRYS, YDLNGNINLLSHGNSARLTPL, YDLRDRITRLGEIQYKMDEDG, YNSNGLLQKAYNKVSGWTVQY, and YDGLGRRVASKSSLGQHLQFF. N2291 is a glycosylation site (N-linked (GlcNAc...) asparagine). 2 YD repeats span residues 2302 to 2319 and 2320 to 2343; these read YDLQGHLIAMELSSGEEY and YVACDNMGTPLAVFSSRGQVIKEI. S2586 carries the post-translational modification Phosphoserine. N-linked (GlcNAc...) asparagine glycosylation occurs at N2608.

It belongs to the tenascin family. Teneurin subfamily. In terms of assembly, homodimer; disulfide-linked. Heterodimer with either TENM2 or TENM3. May also form heterodimer with TENM4. Ten-1 ICD interacts with SORBS1 (via third SH3 domain). Interacts with MBD1 isoform 2. Ten-1 ICD interacts with HINT1. In terms of processing, once secreted, may also be cleaved to give rise to the TCAP-1 form. Post-translationally, derives from the plasma membrane form by proteolytic processing. Further proteolytic cleavage may generate 11.9 and 4.7 kDa bioactive peptides. Isoform 1 and isoform 2 are expressed in the brain. Isoform 2 is expressed in the granular layer of the dentate gyrus and the pyramidal layer (Py) of the CA1, CA2 and CA3 of the hippocampus (at protein level). Expressed in the cortex, thalamus, CA1, CA2, CA3, dentate gyrus and granular layer of the hippocampus. Weakly expressed in kidney, testis and lung.

The protein localises to the cell membrane. It localises to the cytoplasm. The protein resides in the secreted. It is found in the nucleus. Its subcellular location is the nucleus speckle. The protein localises to the nucleus matrix. It localises to the cytoskeleton. Its function is as follows. Involved in neural development, regulating the establishment of proper connectivity within the nervous system. May function as a cellular signal transducer. Plays a role in the regulation of neuroplasticity in the limbic system. Mediates a rapid reorganization of actin- and tubulin-based cytoskeleton elements with an increase in dendritic arborization and spine density formation of neurons in the hippocampus and amygdala. Induces BDNF transcription inhibition in neurons. Activates the mitogen-activated protein (MAP) kinase 2 (MEK2) and extracellular signal-regulated kinase (ERK) cascade. Also acts as a bioactive neuroprotective peptide on limbic neurons of the brain and regulates stress-induced behavior: attenuates alkalosis-associated necrotic cell death and the effects of corticotropin-releasing factor (CRF) on c-fos/FOS induction and on the reinstatement of cocaine seeking. Functionally, induces gene transcription activation. This is Teneurin-1 (Tenm1) from Mus musculus (Mouse).